Consider the following 123-residue polypeptide: Small ribosomal subunit protein uS12 (123 aa).

Residue aspartate 89 is modified to 3-methylthioaspartic acid.

This sequence belongs to the universal ribosomal protein uS12 family. As to quaternary structure, part of the 30S ribosomal subunit. Contacts proteins S8 and S17. May interact with IF1 in the 30S initiation complex.

Functionally, with S4 and S5 plays an important role in translational accuracy. Its function is as follows. Interacts with and stabilizes bases of the 16S rRNA that are involved in tRNA selection in the A site and with the mRNA backbone. Located at the interface of the 30S and 50S subunits, it traverses the body of the 30S subunit contacting proteins on the other side and probably holding the rRNA structure together. The combined cluster of proteins S8, S12 and S17 appears to hold together the shoulder and platform of the 30S subunit. The protein is Small ribosomal subunit protein uS12 of Prochlorococcus marinus (strain MIT 9211).